Reading from the N-terminus, the 146-residue chain is Snaclec echicetin subunit beta (146 aa).

The first 23 residues, 1–23 (MGRFISVSFGLLVLLLSLSGTGA), serve as a signal peptide directing secretion. 3 cysteine pairs are disulfide-bonded: Cys-25/Cys-36, Cys-53/Cys-142, and Cys-119/Cys-134. A C-type lectin domain is found at 32–143 (YEGYCYKVFK…CTWTFSFVCK (112 aa)).

It belongs to the snaclec family. Heterodimer of subunits alpha and beta; disulfide-linked. As to expression, expressed by the venom gland.

The protein localises to the secreted. Functionally, binding of echicetin to glycoprotein Ibalpha (GP1BA) receptor on platelets alone results in inhibition of platelet aggregation, while binding to both GPIba receptor and IgMk promotes platelet aggregation and signal transduction. The chain is Snaclec echicetin subunit beta from Echis carinatus (Saw-scaled viper).